The sequence spans 333 residues: Transcription termination factor MTERF6, chloroplastic/mitochondrial (333 aa).

This sequence belongs to the mTERF family.

It localises to the plastid. It is found in the chloroplast. Its subcellular location is the mitochondrion. Functionally, transcription termination factor essential for chloroplast development. Required for maturation of 16S rRNA, 18S rRNA and 23S rRNA in the chloroplast. Binds to a specific region within the tRNA(Ile)(GAU) gene at a position adjacent to and downstream of the 16S rRNA gene. Required for the maturation of tRNA(Ile)(GAU). Binds to double-stranded DNA. The protein is Transcription termination factor MTERF6, chloroplastic/mitochondrial of Arabidopsis thaliana (Mouse-ear cress).